Consider the following 27-residue polypeptide: Ranatuerin-2Cb (27 aa).

Cys20 and Cys25 are oxidised to a cystine.

Expressed by the skin glands.

The protein localises to the secreted. Its function is as follows. Antibacterial activity against Gram-positive bacterium S.aureus (MIC=40 uM) and Gram-negative bacterium E.coli (MIC=2 uM). Has activity against C.albicans (MIC=46 uM). This is Ranatuerin-2Cb from Lithobates clamitans (Green frog).